The sequence spans 206 residues: Proteasome subunit beta 2 (206 aa).

Positions 1-10 are cleaved as a propeptide — removed in mature form; by autocatalysis; the sequence is MLHLKEKLKG. Thr-11 (nucleophile) is an active-site residue.

This sequence belongs to the peptidase T1B family. As to quaternary structure, the 20S proteasome core is composed of 14 alpha and 14 beta subunits that assemble into four stacked heptameric rings, resulting in a barrel-shaped structure. The two inner rings, each composed of seven catalytic beta subunits, are sandwiched by two outer rings, each composed of seven alpha subunits. The catalytic chamber with the active sites is on the inside of the barrel. Has a gated structure, the ends of the cylinder being occluded by the N-termini of the alpha-subunits. Is capped at one or both ends by the proteasome regulatory ATPase, PAN.

It is found in the cytoplasm. The catalysed reaction is Cleavage of peptide bonds with very broad specificity.. Its activity is regulated as follows. The formation of the proteasomal ATPase PAN-20S proteasome complex, via the docking of the C-termini of PAN into the intersubunit pockets in the alpha-rings, triggers opening of the gate for substrate entry. Interconversion between the open-gate and close-gate conformations leads to a dynamic regulation of the 20S proteasome proteolysis activity. In terms of biological role, component of the proteasome core, a large protease complex with broad specificity involved in protein degradation. The sequence is that of Proteasome subunit beta 2 from Pyrococcus furiosus (strain ATCC 43587 / DSM 3638 / JCM 8422 / Vc1).